We begin with the raw amino-acid sequence, 148 residues long: Large ribosomal subunit protein bL9 (148 aa).

This sequence belongs to the bacterial ribosomal protein bL9 family.

Binds to the 23S rRNA. This Desulfatibacillum aliphaticivorans protein is Large ribosomal subunit protein bL9.